The chain runs to 302 residues: Glutaminase (302 aa).

S61, N111, E155, N162, Y186, Y238, and V256 together coordinate substrate.

This sequence belongs to the glutaminase family. In terms of assembly, homotetramer.

It catalyses the reaction L-glutamine + H2O = L-glutamate + NH4(+). In Pseudomonas paraeruginosa (strain DSM 24068 / PA7) (Pseudomonas aeruginosa (strain PA7)), this protein is Glutaminase.